Reading from the N-terminus, the 444-residue chain is UDP-N-acetylglucosamine 1-carboxyvinyltransferase (444 aa).

Residue 22-23 participates in phosphoenolpyruvate binding; the sequence is KN. A UDP-N-acetyl-alpha-D-glucosamine-binding site is contributed by Arg94. Asp119 serves as the catalytic Proton donor. UDP-N-acetyl-alpha-D-glucosamine-binding residues include Asp309 and Val331.

Belongs to the EPSP synthase family. MurA subfamily.

The protein localises to the cytoplasm. The enzyme catalyses phosphoenolpyruvate + UDP-N-acetyl-alpha-D-glucosamine = UDP-N-acetyl-3-O-(1-carboxyvinyl)-alpha-D-glucosamine + phosphate. It functions in the pathway cell wall biogenesis; peptidoglycan biosynthesis. Functionally, cell wall formation. Adds enolpyruvyl to UDP-N-acetylglucosamine. This chain is UDP-N-acetylglucosamine 1-carboxyvinyltransferase, found in Chlamydia trachomatis serovar D (strain ATCC VR-885 / DSM 19411 / UW-3/Cx).